Reading from the N-terminus, the 276-residue chain is NADPH-dependent 7-cyano-7-deazaguanine reductase (276 aa).

Position 83–85 (83–85) interacts with substrate; the sequence is VES. 85-86 contributes to the NADPH binding site; the sequence is SK. The active-site Thioimide intermediate is Cys-184. Asp-191 acts as the Proton donor in catalysis. Residue 223-224 participates in substrate binding; that stretch reads HE. Residue 252 to 253 participates in NADPH binding; that stretch reads RG.

It belongs to the GTP cyclohydrolase I family. QueF type 2 subfamily. In terms of assembly, homodimer.

Its subcellular location is the cytoplasm. It catalyses the reaction 7-aminomethyl-7-carbaguanine + 2 NADP(+) = 7-cyano-7-deazaguanine + 2 NADPH + 3 H(+). It participates in tRNA modification; tRNA-queuosine biosynthesis. Functionally, catalyzes the NADPH-dependent reduction of 7-cyano-7-deazaguanine (preQ0) to 7-aminomethyl-7-deazaguanine (preQ1). The protein is NADPH-dependent 7-cyano-7-deazaguanine reductase of Azotobacter vinelandii (strain DJ / ATCC BAA-1303).